Here is a 396-residue protein sequence, read N- to C-terminus: OTU domain-containing protein 3 (396 aa).

The interval 1 to 49 (MSRKQAAKSRPGSGGRRAEAERKRDERAARRALAKERRNRPDPGGSGCE) is disordered. The segment covering 16-41 (RRAEAERKRDERAARRALAKERRNRP) has biased composition (basic and acidic residues). Residues 64–188 (LKLREVPGDG…GEHYDSVRRI (125 aa)) form the OTU domain. An N6-acetyllysine modification is found at lysine 65. The interval 69-75 (VPGDGNC) is cys-loop. The active site involves aspartate 72. The active-site Nucleophile is cysteine 75. 2 positions are modified to N6-acetyllysine: lysine 121 and lysine 128. Residues 126–136 (LSKPGTFAGND) are variable-loop. A his-loop region spans residues 176 to 181 (YRYGEH). Residue histidine 181 is part of the active site. Lysine 219 carries the post-translational modification N6-acetyllysine. One can recognise a UBA-like domain in the interval 229-269 (DDVEDAVHKVGSATGCTDFNLIVQNLEAENYNIKSAITALL). The tract at residues 275 to 381 (TGNDAEENHE…RDTGRSEADM (107 aa)) is disordered. 3 stretches are compositionally biased toward basic and acidic residues: residues 280–301 (EENH…EAGS), 312–331 (NEGR…ESKA), and 343–379 (QRRE…RSEA). Position 290 is an N6-acetyllysine (lysine 290).

In terms of processing, glucose and fatty acids stimulate CREBBP-dependent acetylation, promoting its nuclear translocation.

The protein localises to the cytoplasm. It is found in the nucleus. The catalysed reaction is Thiol-dependent hydrolysis of ester, thioester, amide, peptide and isopeptide bonds formed by the C-terminal Gly of ubiquitin (a 76-residue protein attached to proteins as an intracellular targeting signal).. Functionally, deubiquitinating enzyme that hydrolyzes 'Lys-6'- and 'Lys-11'-linked polyubiquitin. Also hydrolyzes heterotypic (mixed and branched) and homotypic chains. Important regulator of energy metabolism. Glucose and fatty acids trigger its nuclear translocation by CBP-dependent acetylation. In the nucleus, deubiquitinates and stabilizes the nuclear receptor PPARD regulating the expression of various genes involved in glucose and lipid metabolism and oxidative phosphorylation. Also acts as a negative regulator of the ribosome quality control (RQC) by mediating deubiquitination of 40S ribosomal proteins RPS10/eS10 and RPS20/uS10, thereby antagonizing ZNF598-mediated 40S ubiquitination. The chain is OTU domain-containing protein 3 (Otud3) from Mus musculus (Mouse).